The following is a 421-amino-acid chain: UDP-N-acetylglucosamine 1-carboxyvinyltransferase 2 (421 aa).

22–23 is a phosphoenolpyruvate binding site; the sequence is KN. Arg95 is a binding site for UDP-N-acetyl-alpha-D-glucosamine. Cys119 serves as the catalytic Proton donor. Position 119 is a 2-(S-cysteinyl)pyruvic acid O-phosphothioketal (Cys119). UDP-N-acetyl-alpha-D-glucosamine-binding positions include 124–128, Asp308, and Val330; that span reads RPIEQ.

This sequence belongs to the EPSP synthase family. MurA subfamily.

The protein resides in the cytoplasm. It carries out the reaction phosphoenolpyruvate + UDP-N-acetyl-alpha-D-glucosamine = UDP-N-acetyl-3-O-(1-carboxyvinyl)-alpha-D-glucosamine + phosphate. It functions in the pathway cell wall biogenesis; peptidoglycan biosynthesis. Functionally, cell wall formation. Adds enolpyruvyl to UDP-N-acetylglucosamine. The protein is UDP-N-acetylglucosamine 1-carboxyvinyltransferase 2 of Staphylococcus saprophyticus subsp. saprophyticus (strain ATCC 15305 / DSM 20229 / NCIMB 8711 / NCTC 7292 / S-41).